An 896-amino-acid chain; its full sequence is Probable DNA-directed RNA polymerase (896 aa).

Catalysis depends on residues Asp546, Lys617, and Asp798.

This sequence belongs to the phage and mitochondrial RNA polymerase family.

The protein localises to the mitochondrion. It catalyses the reaction RNA(n) + a ribonucleoside 5'-triphosphate = RNA(n+1) + diphosphate. Functionally, DNA-dependent RNA polymerase catalyzes the transcription of DNA into RNA using the four ribonucleoside triphosphates as substrates. In Neurospora crassa, this protein is Probable DNA-directed RNA polymerase.